A 473-amino-acid polypeptide reads, in one-letter code: H(+)/Cl(-) exchange transporter ClcA (473 aa).

Topologically, residues 1–32 are cytoplasmic; the sequence is MKTDTPSLETPQAARLRRRQLIRQLLERDKTP. A helical membrane pass occupies residues 33 to 69; it reads LAILFMAAVVGTLVGLAAVAFDKGVAWLQNQRMGALV. The Periplasmic portion of the chain corresponds to 70–76; the sequence is HTADNYP. The helical transmembrane segment at 77–100 threads the bilayer; it reads LLLTVAFLCSAVLAMFGYFLVRKY. The Selectivity filter part_1 signature appears at 106–110; it reads GSGIP. Ser107 contributes to the chloride binding site. Residues 109-116 constitute an intramembrane region (helical); that stretch reads IPEIEGAL. The Cytoplasmic segment spans residues 117–123; that stretch reads EDQRPVR. The next 2 helical transmembrane spans lie at 124-141 and 148-166; these read WWRV…TLGG and EGPT…LDVF. A Selectivity filter part_2 motif is present at residues 146–150; sequence GREGP. Over 167–176 the chain is Cytoplasmic; that stretch reads RLKGDEARHT. 2 consecutive intramembrane regions (helical) follow at residues 177-189 and 193-201; these read LLAT…LAAA and PLAGILFII. Residues 202-214 lie on the Cytoplasmic side of the membrane; the sequence is EEMRPQFRYTLIS. A helical membrane pass occupies residues 215-232; the sequence is IKAVFIGVIMSTIMYRIF. Over 233–252 the chain is Periplasmic; sequence NHEVALIDVGKLSDAPLNTL. The helical transmembrane segment at 253–281 threads the bilayer; it reads WLYLILGIIFGIFGPIFNKWVLGMQDLLH. Over 282–287 the chain is Cytoplasmic; it reads RVHGGN. Residues 288 to 309 traverse the membrane as a helical segment; that stretch reads ITKWVLMGGAIGGLCGLLGFVA. The Periplasmic segment spans residues 310–329; sequence PATSGGGFNLIPIATAGNFS. Helical transmembrane passes span 330-349 and 355-376; these read MGML…LCFS and GIFA…MVAV. The Selectivity filter part_3 signature appears at 355–359; it reads GIFAP. Residues Ile356 and Phe357 each coordinate chloride. Residues 377–386 lie on the Periplasmic side of the membrane; it reads ELFPQYHLEA. The segment at residues 387 to 401 is an intramembrane region (helical); it reads GTFAIAGMGALLAAS. The segment at residues 402–404 is an intramembrane region (note=Loop between two helices); sequence IRA. Positions 405–416 form an intramembrane region, helical; sequence PLTGIILVLEMT. Residues 417 to 421 constitute an intramembrane region (note=Loop between two helices); that stretch reads DNYQL. The chain crosses the membrane as a helical span at residues 422–438; the sequence is ILPMIITGLGATLLAQF. Over 439-473 the chain is Cytoplasmic; sequence TGGKPLYSAILARTLAKQEAEQLARSKAASARENT. Residue Tyr445 coordinates chloride.

The protein belongs to the chloride channel (TC 2.A.49) family. ClcA subfamily. As to quaternary structure, homodimer.

The protein resides in the cell inner membrane. It carries out the reaction 2 chloride(in) + H(+)(out) = 2 chloride(out) + H(+)(in). Proton-coupled chloride transporter. Functions as antiport system and exchanges two chloride ions for 1 proton. Probably acts as an electrical shunt for an outwardly-directed proton pump that is linked to amino acid decarboxylation, as part of the extreme acid resistance (XAR) response. The sequence is that of H(+)/Cl(-) exchange transporter ClcA from Escherichia coli O45:K1 (strain S88 / ExPEC).